Reading from the N-terminus, the 378-residue chain is Spermidine/putrescine import ATP-binding protein PotA (378 aa).

The ABC transporter domain maps to 18–248 (VQLAGIRKCF…PKNLFVAGFI (231 aa)). 50–57 (GPSGCGKT) serves as a coordination point for ATP.

It belongs to the ABC transporter superfamily. Spermidine/putrescine importer (TC 3.A.1.11.1) family. As to quaternary structure, the complex is composed of two ATP-binding proteins (PotA), two transmembrane proteins (PotB and PotC) and a solute-binding protein (PotD).

The protein localises to the cell inner membrane. It catalyses the reaction ATP + H2O + polyamine-[polyamine-binding protein]Side 1 = ADP + phosphate + polyamineSide 2 + [polyamine-binding protein]Side 1.. Part of the ABC transporter complex PotABCD involved in spermidine/putrescine import. Responsible for energy coupling to the transport system. This chain is Spermidine/putrescine import ATP-binding protein PotA, found in Shigella flexneri.